A 914-amino-acid polypeptide reads, in one-letter code: Isoleucine--tRNA ligase (914 aa).

Residues P64–H74 carry the 'HIGH' region motif. E557 contributes to the L-isoleucyl-5'-AMP binding site. Positions A598–S602 match the 'KMSKS' region motif. K601 lines the ATP pocket. Residues C889, C892, C906, and C909 each coordinate Zn(2+).

The protein belongs to the class-I aminoacyl-tRNA synthetase family. IleS type 1 subfamily. As to quaternary structure, monomer. Zn(2+) is required as a cofactor.

It localises to the cytoplasm. It catalyses the reaction tRNA(Ile) + L-isoleucine + ATP = L-isoleucyl-tRNA(Ile) + AMP + diphosphate. Catalyzes the attachment of isoleucine to tRNA(Ile). As IleRS can inadvertently accommodate and process structurally similar amino acids such as valine, to avoid such errors it has two additional distinct tRNA(Ile)-dependent editing activities. One activity is designated as 'pretransfer' editing and involves the hydrolysis of activated Val-AMP. The other activity is designated 'posttransfer' editing and involves deacylation of mischarged Val-tRNA(Ile). The chain is Isoleucine--tRNA ligase from Leptospira borgpetersenii serovar Hardjo-bovis (strain JB197).